Consider the following 201-residue polypeptide: Putative amino-acid transporter Mb0498 (201 aa).

5 helical membrane-spanning segments follow: residues 25-45 (VLVI…AGVG), 57-77 (MTLV…LLAA), 104-124 (LVVT…IGAL), 133-153 (WFFG…LGFS), and 169-189 (ILDA…LVTS).

The protein belongs to the LysE/ArgO transporter (TC 2.A.75) family.

The protein resides in the cell membrane. This chain is Putative amino-acid transporter Mb0498, found in Mycobacterium bovis (strain ATCC BAA-935 / AF2122/97).